Consider the following 169-residue polypeptide: Transmembrane protein B169L (169 aa).

A run of 2 helical transmembrane segments spans residues 28-48 and 60-80; these read NPFI…FAIC and TAIY…YVLN. A glycan (N-linked (GlcNAc...) asparagine; by host) is linked at asparagine 88. The tract at residues 107 to 169 is disordered; sequence DEIIPPISPP…EVIMPSQYNN (63 aa). Residues 144–154 show a composition bias toward low complexity; it reads SKPASSADSKP.

Belongs to the asfivirus B169L family.

It localises to the host membrane. Its subcellular location is the virion. This Ornithodoros (relapsing fever ticks) protein is Transmembrane protein B169L.